We begin with the raw amino-acid sequence, 234 residues long: Cyclin-J18 (234 aa).

This sequence belongs to the cyclin family.

The polypeptide is Cyclin-J18 (CYCJ18) (Arabidopsis thaliana (Mouse-ear cress)).